Here is a 79-residue protein sequence, read N- to C-terminus: uncharacterized protein (79 aa).

A signal peptide spans 1 to 24 (MKMNPCTVILCKSLFFFCLFQVDC). Asn33 carries N-linked (GlcNAc...) asparagine glycosylation.

It localises to the secreted. This is an uncharacterized protein from Saccharomyces cerevisiae (strain ATCC 204508 / S288c) (Baker's yeast).